The chain runs to 122 residues: Acidic phospholipase A2 (122 aa).

7 disulfide bridges follow: C26–C115, C28–C44, C43–C95, C49–C122, C50–C88, C57–C81, and C75–C86. Positions 27, 29, and 31 each coordinate Ca(2+). H47 is a catalytic residue. Ca(2+) is bound at residue D48. The active site involves D89.

May form tetramers. Ca(2+) is required as a cofactor. Expressed by the venom gland.

It localises to the secreted. It catalyses the reaction a 1,2-diacyl-sn-glycero-3-phosphocholine + H2O = a 1-acyl-sn-glycero-3-phosphocholine + a fatty acid + H(+). PLA2 catalyzes the calcium-dependent hydrolysis of the 2-acyl groups in 3-sn-phosphoglycerides. In vivo, is non-lethal to mice when intravenously injected up to a concentration of 30 ug, however does show significant edematogenic activity at the injection site. This is Acidic phospholipase A2 from Lachesis acrochorda (Chocoan bushmaster).